We begin with the raw amino-acid sequence, 285 residues long: Probable endonuclease 4 (285 aa).

Residues His69, His109, Glu145, Asp179, His182, His216, Asp229, His231, and Glu261 each coordinate Zn(2+).

The protein belongs to the AP endonuclease 2 family. Zn(2+) is required as a cofactor.

It catalyses the reaction Endonucleolytic cleavage to 5'-phosphooligonucleotide end-products.. Its function is as follows. Endonuclease IV plays a role in DNA repair. It cleaves phosphodiester bonds at apurinic or apyrimidinic (AP) sites, generating a 3'-hydroxyl group and a 5'-terminal sugar phosphate. The sequence is that of Probable endonuclease 4 from Salmonella agona (strain SL483).